The chain runs to 422 residues: Putative polyketide beta-ketoacyl synthase 1 (422 aa).

One can recognise a Ketosynthase family 3 (KS3) domain in the interval 2-416 (SRRVVVTGIG…GFQSAVVLTG (415 aa)). Active-site for beta-ketoacyl synthase activity residues include Cys169, His309, and His346.

Belongs to the thiolase-like superfamily. Beta-ketoacyl-ACP synthases family.

Involved in developmentally regulated synthesis of a compound biosynthetically related to polyketide antibiotics which is essential for spore color in Streptomyces halstedii. The polypeptide is Putative polyketide beta-ketoacyl synthase 1 (sch1) (Streptomyces halstedii).